A 234-amino-acid chain; its full sequence is Probable transcriptional regulatory protein PFL_3960 (234 aa).

It belongs to the TACO1 family.

The protein localises to the cytoplasm. This is Probable transcriptional regulatory protein PFL_3960 from Pseudomonas fluorescens (strain ATCC BAA-477 / NRRL B-23932 / Pf-5).